The primary structure comprises 634 residues: Bacteriophytochrome (634 aa).

Cys13 serves as a coordination point for biliverdin IXalpha. One can recognise a PAS 1 domain in the interval 13 to 118; that stretch reads CAREPIHIPG…YPQQWLVEME (106 aa). The interval 13–514 is photosensory core domain; it reads CAREPIHIPG…ELMERKRFQQ (502 aa). The region spanning 151 to 305 is the GAF domain; it reads RVAKGLRSLI…VTDAVARTLA (155 aa). Residues 325 to 508 are phytochrome-specific (PHY); it reads TVREKLITDF…SLRVLIELME (184 aa). The tongue domain stretch occupies residues 452–480; it reads WAGNPQLAKLEDIPNSRLSPRKSFDLWQQ. In terms of domain architecture, PAS 2 spans 515–590; it reads DFTLLEASLS…ELLQDALRNG (76 aa). A PAS9, output module, not required to bind biliverdin IX-alpha, required for dimerization region spans residues 515–634; sequence DFTLLEASLS…HWLLQLRDPE (120 aa).

This sequence in the N-terminal section; belongs to the phytochrome family. As to quaternary structure, forms head-to-head homodimers. Contains one covalently linked biliverdin IX-alpha chromophore; present in the crystal structure as a mixture of Pr and Meta-R configurations.

In terms of biological role, photoreceptor which exists in two forms that are reversibly interconvertible by light: far-red light (733 nm) converts protein to the red-absorbing (Pr) form, while red light (630 nm) partly converts the protein to the far-red-absorbing (Pfr) form. Regulates virulence of X.campestris pv. campestris on its host plants, perhaps by fine-tuning expression to ambient light levels and/or spatial cues. The Pr form may sense light and partially inhibit virulence; in the dark (Pfr form) biofilm and xanathan production rise and bacteria are more virulent. Strains overexpressing this protein have significantly decreased amounts of extracellular beta-1,4-endoglucanase, produce less xanthin and have decreased transcription of genes involved in virulence such as endoglucanases, type 2 secretion systems, xanthan production and flagellar-dependent motility. The polypeptide is Bacteriophytochrome (bphP) (Xanthomonas campestris pv. campestris (strain 8004)).